The sequence spans 314 residues: MGPLINRCKKILLPTTVPPATMRIWLLGGPLPFLLLLSGLQRPTEGSEVAIKIDFDFAPGSFDDQYQGCSKQVMEKLTQGDYFTKDIEAQKNYFRMWQKAHLAWLNQGKVLPQNMTTTHAVAILFYTLNSNVHSDFTRAMASVARTPQQYERSFHFKYLHYYLTSAIQLLRKDSIMENGTLCYEVHYRTKDVHFNAYTGATIRFGQFLSTSLLKEEAQEFGNQTLFTIFTCLGAPVQYFSLKKEVLIPPYELFKVINMSYHPRGNWLQLRSTGNLSTYNCQLLKASSKKCIPDPIAIASLSFLTSVIIFSKSRV.

Positions 1-46 are cleaved as a signal peptide; it reads MGPLINRCKKILLPTTVPPATMRIWLLGGPLPFLLLLSGLQRPTEG. 2 cysteine pairs are disulfide-bonded: cysteine 69-cysteine 280 and cysteine 182-cysteine 231. The region spanning 91–276 is the TR mART core domain; sequence KNYFRMWQKA…LQLRSTGNLS (186 aa). N-linked (GlcNAc...) asparagine glycosylation occurs at asparagine 114. Tyrosine 126 provides a ligand contact to NAD(+). An N-linked (GlcNAc...) asparagine glycan is attached at asparagine 178. Glutamine 206 is a binding site for NAD(+). The N-linked (GlcNAc...) asparagine glycan is linked to asparagine 222. An NAD(+)-binding site is contributed by serine 240. 2 N-linked (GlcNAc...) asparagine glycosylation sites follow: asparagine 257 and asparagine 274. A lipid anchor (GPI-anchor amidated alanine) is attached at alanine 285. The propeptide at 286 to 314 is removed in mature form; that stretch reads SSKKCIPDPIAIASLSFLTSVIIFSKSRV.

It belongs to the Arg-specific ADP-ribosyltransferase family.

It is found in the cell membrane. The catalysed reaction is L-arginyl-[protein] + NAD(+) = N(omega)-(ADP-D-ribosyl)-L-arginyl-[protein] + nicotinamide + H(+). This Pan troglodytes (Chimpanzee) protein is Ecto-ADP-ribosyltransferase 4 (ART4).